We begin with the raw amino-acid sequence, 1447 residues long: DNA-directed RNA polymerase subunit beta' (1447 aa).

Residues Cys-70, Cys-72, Cys-85, and Cys-88 each coordinate Zn(2+). Mg(2+) contacts are provided by Asp-460, Asp-462, and Asp-464. Residues Cys-890, Cys-964, Cys-971, and Cys-974 each contribute to the Zn(2+) site.

The protein belongs to the RNA polymerase beta' chain family. The RNAP catalytic core consists of 2 alpha, 1 beta, 1 beta' and 1 omega subunit. When a sigma factor is associated with the core the holoenzyme is formed, which can initiate transcription. Mg(2+) serves as cofactor. Zn(2+) is required as a cofactor.

It carries out the reaction RNA(n) + a ribonucleoside 5'-triphosphate = RNA(n+1) + diphosphate. Its function is as follows. DNA-dependent RNA polymerase catalyzes the transcription of DNA into RNA using the four ribonucleoside triphosphates as substrates. In Desulfosudis oleivorans (strain DSM 6200 / JCM 39069 / Hxd3) (Desulfococcus oleovorans), this protein is DNA-directed RNA polymerase subunit beta'.